Consider the following 115-residue polypeptide: Large ribosomal subunit protein bL20 (115 aa).

Belongs to the bacterial ribosomal protein bL20 family.

Its function is as follows. Binds directly to 23S ribosomal RNA and is necessary for the in vitro assembly process of the 50S ribosomal subunit. It is not involved in the protein synthesizing functions of that subunit. This Borrelia duttonii (strain Ly) protein is Large ribosomal subunit protein bL20.